Consider the following 436-residue polypeptide: GTPase Der (436 aa).

2 consecutive EngA-type G domains span residues 3-168 (PLIA…PESD) and 177-352 (IRLA…DNRA). Residues 9 to 16 (GRPNVGKS), 56 to 60 (DTGGY), 120 to 123 (NKVE), 183 to 190 (GRPNVGKS), 230 to 234 (DTAGL), and 295 to 298 (NKWD) each bind GTP. The 84-residue stretch at 353–436 (RKISTSALNR…VTISLRFLQK (84 aa)) folds into the KH-like domain.

Belongs to the TRAFAC class TrmE-Era-EngA-EngB-Septin-like GTPase superfamily. EngA (Der) GTPase family. As to quaternary structure, associates with the 50S ribosomal subunit.

In terms of biological role, GTPase that plays an essential role in the late steps of ribosome biogenesis. This chain is GTPase Der, found in Chlorobium phaeovibrioides (strain DSM 265 / 1930) (Prosthecochloris vibrioformis (strain DSM 265)).